Here is a 166-residue protein sequence, read N- to C-terminus: Regulatory protein RecX (166 aa).

This sequence belongs to the RecX family.

The protein localises to the cytoplasm. Functionally, modulates RecA activity. The sequence is that of Regulatory protein RecX from Shigella dysenteriae serotype 1 (strain Sd197).